We begin with the raw amino-acid sequence, 826 residues long: Ubiquitin carboxyl-terminal hydrolase 16 (826 aa).

The segment at P22–A142 adopts a UBP-type zinc-finger fold. 12 residues coordinate Zn(2+): C24, H26, C48, C51, C74, C77, C82, H90, H94, H103, C116, and C119. A Glycyl lysine isopeptide (Lys-Gly) (interchain with G-Cter in SUMO2) cross-link involves residue K140. Positions N144–T189 are disordered. Positions L158–A180 are enriched in basic and acidic residues. A Phosphoserine modification is found at S188. In terms of domain architecture, USP spans K195–I825. The active-site Nucleophile is the C204. Basic and acidic residues predominate over residues S393–M407. Positions S393–K458 are disordered. Residues E408 to D419 are compositionally biased toward acidic residues. S414 bears the Phosphoserine mark. Residues N420 to D429 show a composition bias toward basic and acidic residues. The segment covering H437–Q457 has biased composition (basic residues). Phosphoserine occurs at positions 530 and 551. Catalysis depends on H760, which acts as the Proton acceptor.

Belongs to the peptidase C19 family. USP16 subfamily. Homotetramer. Associates with late pre-40S ribosomes. Interacts with CEP78; promoting deubiquitination of tektins. Post-translationally, phosphorylated at the onset of mitosis and dephosphorylated during the metaphase/anaphase transition. Phosphorylation by AURKB enhances the deubiquitinase activity.

It is found in the nucleus. The catalysed reaction is Thiol-dependent hydrolysis of ester, thioester, amide, peptide and isopeptide bonds formed by the C-terminal Gly of ubiquitin (a 76-residue protein attached to proteins as an intracellular targeting signal).. Its function is as follows. Specifically deubiquitinates 'Lys-120' of histone H2A (H2AK119Ub), a specific tag for epigenetic transcriptional repression, thereby acting as a coactivator. Deubiquitination of histone H2A is a prerequisite for subsequent phosphorylation at 'Ser-11' of histone H3 (H3S10ph), and is required for chromosome segregation when cells enter into mitosis. In resting B- and T-lymphocytes, phosphorylation by AURKB leads to enhance its activity, thereby maintaining transcription in resting lymphocytes. Regulates Hox gene expression via histone H2A deubiquitination. Prefers nucleosomal substrates. Does not deubiquitinate histone H2B. Also deubiquitinates non-histone proteins, such as ribosomal protein RPS27A: deubiquitination of monoubiquitinated RPS27A promotes maturation of the 40S ribosomal subunit. Also mediates deubiquitination of tektin proteins (TEKT1, TEKT2, TEK3, TEKT4 and TEKT5), promoting their stability. This chain is Ubiquitin carboxyl-terminal hydrolase 16, found in Bos taurus (Bovine).